The sequence spans 562 residues: Berberine bridge enzyme-like C-1 (562 aa).

The first 19 residues, 1-19 (MFPLIILISFSFTFLSASA), serve as a signal peptide directing secretion. Asn-29 and Asn-41 each carry an N-linked (GlcNAc...) asparagine glycan. A disulfide bridge connects residues Cys-33 and Cys-90. Positions 68–244 (NMPKPTVIIL…YAWKIRLVKV (177 aa)) constitute an FAD-binding PCMH-type domain. The residue at position 105 (His-105) is a Pros-8alpha-FAD histidine. N-linked (GlcNAc...) asparagine glycans are attached at residues Asn-359, Asn-498, and Asn-558.

Belongs to the oxygen-dependent FAD-linked oxidoreductase family. It depends on FAD as a cofactor. As to expression, mostly expressed in roots.

Its subcellular location is the vacuole. Its pathway is alkaloid biosynthesis; nicotine biosynthesis. Its function is as follows. Involved in the biosynthesis of pyridine alkaloid natural products, leading mainly to the production of anabasine, anatabine, nicotine and nornicotine, effective deterrents against herbivores with antiparasitic and pesticide properties (neurotoxins); nornicotine serves as the precursor in the synthesis of the carcinogen compound N'-nitrosonornicotine (NNN). Catalyzes a late oxidation step subsequent to the pyridine ring condensation reaction in the biosynthesis of alkaloids. The protein is Berberine bridge enzyme-like C-1 of Nicotiana tabacum (Common tobacco).